The following is a 240-amino-acid chain: Zein-alpha M6 (240 aa).

A signal peptide spans 1-21; the sequence is MATKIFSLLMLLALSTCVANA.

The protein belongs to the zein family.

Functionally, zeins are major seed storage proteins. The sequence is that of Zein-alpha M6 from Zea mays (Maize).